Here is a 325-residue protein sequence, read N- to C-terminus: Tagatose 1,6-diphosphate aldolase 1 (325 aa).

It belongs to the aldolase LacD family.

It catalyses the reaction D-tagatofuranose 1,6-bisphosphate = D-glyceraldehyde 3-phosphate + dihydroxyacetone phosphate. The protein operates within carbohydrate metabolism; D-tagatose 6-phosphate degradation; D-glyceraldehyde 3-phosphate and glycerone phosphate from D-tagatose 6-phosphate: step 2/2. The sequence is that of Tagatose 1,6-diphosphate aldolase 1 (lacD1) from Streptococcus pyogenes serotype M3 (strain SSI-1).